Consider the following 215-residue polypeptide: Probable nicotinate-nucleotide adenylyltransferase (215 aa).

The protein belongs to the NadD family.

The enzyme catalyses nicotinate beta-D-ribonucleotide + ATP + H(+) = deamido-NAD(+) + diphosphate. Its pathway is cofactor biosynthesis; NAD(+) biosynthesis; deamido-NAD(+) from nicotinate D-ribonucleotide: step 1/1. Functionally, catalyzes the reversible adenylation of nicotinate mononucleotide (NaMN) to nicotinic acid adenine dinucleotide (NaAD). This chain is Probable nicotinate-nucleotide adenylyltransferase, found in Shewanella sp. (strain W3-18-1).